The following is a 595-amino-acid chain: ATP-dependent RNA helicase DBP9 (595 aa).

The short motif at 14–42 (VNFESFKLDARLLQAIKGSGFTHPTLIQS) is the Q motif element. One can recognise a Helicase ATP-binding domain in the interval 46–230 (PLALEEKRDI…QKYCRSPAII (185 aa)). 59–66 (AATGSGKT) provides a ligand contact to ATP. Residues 176–179 (DEVD) carry the DEAD box motif. Residues 243–477 (KLVQYYVRVG…PYSFDLKQVE (235 aa)) enclose the Helicase C-terminal domain. Disordered regions lie at residues 349-371 (KNDETNTVVAEESTNSTTGIKSK) and 560-595 (KISFIPFHKPNKVGKKSKNSKNKKRKGGKTDALKKF). Residues 353–371 (TNTVVAEESTNSTTGIKSK) are compositionally biased toward polar residues. Residues 568-586 (KPNKVGKKSKNSKNKKRKG) show a composition bias toward basic residues.

It belongs to the DEAD box helicase family. DDX56/DBP9 subfamily.

It localises to the nucleus. The protein localises to the nucleolus. The enzyme catalyses ATP + H2O = ADP + phosphate + H(+). Its function is as follows. ATP-binding RNA helicase involved in the biogenesis of 60S ribosomal subunits and is required for the normal formation of 25S and 5.8S rRNAs. The polypeptide is ATP-dependent RNA helicase DBP9 (DBP9) (Candida glabrata (strain ATCC 2001 / BCRC 20586 / JCM 3761 / NBRC 0622 / NRRL Y-65 / CBS 138) (Yeast)).